We begin with the raw amino-acid sequence, 148 residues long: Endoribonuclease YbeY (148 aa).

Residues H113, H117, and H123 each contribute to the Zn(2+) site.

Belongs to the endoribonuclease YbeY family. Zn(2+) is required as a cofactor.

The protein resides in the cytoplasm. Functionally, single strand-specific metallo-endoribonuclease involved in late-stage 70S ribosome quality control and in maturation of the 3' terminus of the 16S rRNA. In Borrelia hermsii (strain HS1 / DAH), this protein is Endoribonuclease YbeY.